A 132-amino-acid polypeptide reads, in one-letter code: Glycine cleavage system H protein (132 aa).

In terms of domain architecture, Lipoyl-binding spans 24–106; it reads TVRVGITDFA…YGAGWLLDVQ (83 aa). Position 65 is an N6-lipoyllysine (lysine 65).

It belongs to the GcvH family. The glycine cleavage system is composed of four proteins: P, T, L and H. It depends on (R)-lipoate as a cofactor.

Functionally, the glycine cleavage system catalyzes the degradation of glycine. The H protein shuttles the methylamine group of glycine from the P protein to the T protein. This Mycobacterium avium (strain 104) protein is Glycine cleavage system H protein.